The primary structure comprises 146 residues: Large ribosomal subunit protein uL23B (146 aa).

The tract at residues 1–22 (MAPSSNKVGKAIQAKKAVVKGS) is disordered.

The protein belongs to the universal ribosomal protein uL23 family.

This protein binds to a specific region on the 26S rRNA. The protein is Large ribosomal subunit protein uL23B (rpl-23A.2) of Caenorhabditis elegans.